The sequence spans 550 residues: Glucose-6-phosphate isomerase (550 aa).

E356 (proton donor) is an active-site residue. Residues H387 and K515 contribute to the active site.

It belongs to the GPI family.

The protein resides in the cytoplasm. It carries out the reaction alpha-D-glucose 6-phosphate = beta-D-fructose 6-phosphate. The protein operates within carbohydrate biosynthesis; gluconeogenesis. It participates in carbohydrate degradation; glycolysis; D-glyceraldehyde 3-phosphate and glycerone phosphate from D-glucose: step 2/4. Its function is as follows. Catalyzes the reversible isomerization of glucose-6-phosphate to fructose-6-phosphate. The protein is Glucose-6-phosphate isomerase of Photobacterium profundum (strain SS9).